We begin with the raw amino-acid sequence, 372 residues long: Queuine tRNA-ribosyltransferase (372 aa).

Asp-89 serves as the catalytic Proton acceptor. Residues 89-93, Asp-161, and Gly-232 contribute to the substrate site; that span reads DSGGF. Residues 262–268 form an RNA binding region; the sequence is GIGDLPS. Residue Asp-281 is the Nucleophile of the active site. Residues 286-290 are RNA binding; important for wobble base 34 recognition; it reads TKAAR. Positions 319, 321, 324, and 351 each coordinate Zn(2+).

The protein belongs to the queuine tRNA-ribosyltransferase family. Homodimer. Within each dimer, one monomer is responsible for RNA recognition and catalysis, while the other monomer binds to the replacement base PreQ1. Zn(2+) serves as cofactor.

The catalysed reaction is 7-aminomethyl-7-carbaguanine + guanosine(34) in tRNA = 7-aminomethyl-7-carbaguanosine(34) in tRNA + guanine. The protein operates within tRNA modification; tRNA-queuosine biosynthesis. Functionally, catalyzes the base-exchange of a guanine (G) residue with the queuine precursor 7-aminomethyl-7-deazaguanine (PreQ1) at position 34 (anticodon wobble position) in tRNAs with GU(N) anticodons (tRNA-Asp, -Asn, -His and -Tyr). Catalysis occurs through a double-displacement mechanism. The nucleophile active site attacks the C1' of nucleotide 34 to detach the guanine base from the RNA, forming a covalent enzyme-RNA intermediate. The proton acceptor active site deprotonates the incoming PreQ1, allowing a nucleophilic attack on the C1' of the ribose to form the product. After dissociation, two additional enzymatic reactions on the tRNA convert PreQ1 to queuine (Q), resulting in the hypermodified nucleoside queuosine (7-(((4,5-cis-dihydroxy-2-cyclopenten-1-yl)amino)methyl)-7-deazaguanosine). The polypeptide is Queuine tRNA-ribosyltransferase (Chlamydia caviae (strain ATCC VR-813 / DSM 19441 / 03DC25 / GPIC) (Chlamydophila caviae)).